The sequence spans 426 residues: Glutamate-1-semialdehyde 2,1-aminomutase (426 aa).

An N6-(pyridoxal phosphate)lysine modification is found at K265.

The protein belongs to the class-III pyridoxal-phosphate-dependent aminotransferase family. HemL subfamily. As to quaternary structure, homodimer. Pyridoxal 5'-phosphate serves as cofactor.

Its subcellular location is the cytoplasm. It catalyses the reaction (S)-4-amino-5-oxopentanoate = 5-aminolevulinate. It functions in the pathway porphyrin-containing compound metabolism; protoporphyrin-IX biosynthesis; 5-aminolevulinate from L-glutamyl-tRNA(Glu): step 2/2. The chain is Glutamate-1-semialdehyde 2,1-aminomutase from Escherichia coli (strain SMS-3-5 / SECEC).